We begin with the raw amino-acid sequence, 256 residues long: Deoxyribose-phosphate aldolase (256 aa).

Residue D102 is the Proton donor/acceptor of the active site. K165 (schiff-base intermediate with acetaldehyde) is an active-site residue. K197 acts as the Proton donor/acceptor in catalysis.

This sequence belongs to the DeoC/FbaB aldolase family. DeoC type 2 subfamily.

The protein resides in the cytoplasm. It catalyses the reaction 2-deoxy-D-ribose 5-phosphate = D-glyceraldehyde 3-phosphate + acetaldehyde. It participates in carbohydrate degradation; 2-deoxy-D-ribose 1-phosphate degradation; D-glyceraldehyde 3-phosphate and acetaldehyde from 2-deoxy-alpha-D-ribose 1-phosphate: step 2/2. In terms of biological role, catalyzes a reversible aldol reaction between acetaldehyde and D-glyceraldehyde 3-phosphate to generate 2-deoxy-D-ribose 5-phosphate. In Shewanella baltica (strain OS155 / ATCC BAA-1091), this protein is Deoxyribose-phosphate aldolase.